Here is a 326-residue protein sequence, read N- to C-terminus: Methyltransferase phqN (326 aa).

The protein belongs to the class I-like SAM-binding methyltransferase superfamily. Erg6/SMT family.

It functions in the pathway alkaloid biosynthesis. Its function is as follows. Methyltransferase; part of the gene cluster that mediates the biosynthesis of paraherquamide, a fungal indole alkaloid that belongs to a family of natural products containing a characteristic bicyclo[2.2.2]diazaoctane core. The first steps in the biosynthesis of paraherquamide is the production of the beta-methyl-proline precursor from L-isoleucine. They require oxidation of a terminally hydroxylated L-isoleucine to the corresponding aldehyde by enzymes which have still to be identified. Spontaneous cyclization and dehydration would yield the 4-methyl pyrolline-5-carboxylic acid, which is then reduced by the pyrroline-5-carboxylate reductase phqD leading to the beta-methyl-proline precursor. The next step of paraherquamide biosynthesis involves coupling of beta-methyl-proline and L-tryptophan by the bimodular NRPS phqB, to produce a monooxopiperazine intermediate. The reductase (R) domain of phqB utilizes NADPH for hydride transfer to reduce the thioester bond of the T domain-tethered linear dipeptide to a hemithioaminal intermediate, which spontaneously cleaves the C-S bond to release the aldehyde product. This compound undergoes spontaneous cyclization and dehydration to give a dienamine which is reverse prenylated at C-2 by the reverse prenyltransferase phqJ. The other prenyltransferase present in the cluster, phqI may be a redundant gene in the pathway. During biosynthetic assembly, the key step to produce the polycyclic core is catalyzed by the bifunctional reductase and intramolecular [4+2] Diels-Alderase, phqE, resulting in formation of the [2.2.2] diazaoctane intermediate preparaherquamide. Following formation of preparaherquamide, an indole 2,3-epoxidation-initiated pinacol-like rearrangement is catalyzed by the phqK FAD-dependent monooxygenase. The prenyltransferase phqA, the cytochrome P450 monooxygenase phqL, and the FAD-linked oxidoreductase phqH (or the cytochrome P450 monooxygenase phqM), are proposed to be involved in the formation of the pyran ring. The FAD-dependent monooxygenase phqK is likely responsible for generation of the spiro-oxindole, and the N-methylation is likely mediated by the phqN methyltransferase leading to the isolable natural product paraherquamide F. However, the order of these biosynthetic steps has still to be determined. In late-stage paraherquamide biosynthesis, the third P450 monooxygenase, phqO, is probably responsible for the C-14 hydroxylation, transforming paraherquamide F to paraherquamide G, and paraherquamide E to the final product paraherquamide A. The expansion from the 6-membered ring pyran (in paraherquamides F and G) to the 7-membered dioxepin ring (in paraherquamides A and E) represents a poorly understood but intriguing process that probably involves the 2-oxoglutarate-dependent dioxygenase phqC. Finally, the remaining members of the paraherquamide cluster, including phqI as well as phqM (or phqH), do not have a clearly prescribed role and appear to be redundant. This chain is Methyltransferase phqN, found in Penicillium fellutanum.